A 113-amino-acid chain; its full sequence is Putative pterin-4-alpha-carbinolamine dehydratase (113 aa).

Belongs to the pterin-4-alpha-carbinolamine dehydratase family.

It carries out the reaction (4aS,6R)-4a-hydroxy-L-erythro-5,6,7,8-tetrahydrobiopterin = (6R)-L-erythro-6,7-dihydrobiopterin + H2O. The polypeptide is Putative pterin-4-alpha-carbinolamine dehydratase (Nitrosospira multiformis (strain ATCC 25196 / NCIMB 11849 / C 71)).